The sequence spans 147 residues: 3-hydroxyacyl-[acyl-carrier-protein] dehydratase FabZ (147 aa).

Histidine 48 is an active-site residue.

The protein belongs to the thioester dehydratase family. FabZ subfamily.

The protein localises to the cytoplasm. The catalysed reaction is a (3R)-hydroxyacyl-[ACP] = a (2E)-enoyl-[ACP] + H2O. Involved in unsaturated fatty acids biosynthesis. Catalyzes the dehydration of short chain beta-hydroxyacyl-ACPs and long chain saturated and unsaturated beta-hydroxyacyl-ACPs. The polypeptide is 3-hydroxyacyl-[acyl-carrier-protein] dehydratase FabZ (Aliarcobacter butzleri (strain RM4018) (Arcobacter butzleri)).